We begin with the raw amino-acid sequence, 156 residues long: Succinate dehydrogenase assembly factor 2-B, mitochondrial (156 aa).

The N-terminal 24 residues, 1–24, are a transit peptide targeting the mitochondrion; that stretch reads MLRQFIVSTVGRRLQLPMMAQSRL.

It belongs to the SDHAF2 family. In terms of assembly, interacts with the flavoprotein subunit within the SDH catalytic dimer.

It localises to the mitochondrion matrix. Its function is as follows. Plays an essential role in the assembly of succinate dehydrogenase (SDH), an enzyme complex (also referred to as respiratory complex II) that is a component of both the tricarboxylic acid (TCA) cycle and the mitochondrial electron transport chain, and which couples the oxidation of succinate to fumarate with the reduction of ubiquinone (coenzyme Q) to ubiquinol. Required for flavinylation (covalent attachment of FAD) of the flavoprotein subunit of the SDH catalytic dimer. This Drosophila simulans (Fruit fly) protein is Succinate dehydrogenase assembly factor 2-B, mitochondrial.